We begin with the raw amino-acid sequence, 629 residues long: tRNA uridine 5-carboxymethylaminomethyl modification enzyme MnmG (629 aa).

FAD-binding positions include 13 to 18 (GGGHAG), V125, and S180. 273-287 (GPRYCPSIEDKVMRF) serves as a coordination point for NAD(+). Q370 contacts FAD.

It belongs to the MnmG family. In terms of assembly, homodimer. Heterotetramer of two MnmE and two MnmG subunits. The cofactor is FAD.

The protein localises to the cytoplasm. In terms of biological role, NAD-binding protein involved in the addition of a carboxymethylaminomethyl (cmnm) group at the wobble position (U34) of certain tRNAs, forming tRNA-cmnm(5)s(2)U34. This chain is tRNA uridine 5-carboxymethylaminomethyl modification enzyme MnmG, found in Citrobacter koseri (strain ATCC BAA-895 / CDC 4225-83 / SGSC4696).